Here is a 375-residue protein sequence, read N- to C-terminus: UDP-N-acetylglucosamine--N-acetylmuramyl-(pentapeptide) pyrophosphoryl-undecaprenol N-acetylglucosamine transferase (375 aa).

UDP-N-acetyl-alpha-D-glucosamine-binding positions include 15–17 (TGG), Asn126, Arg169, Ser197, and Gln298.

It belongs to the glycosyltransferase 28 family. MurG subfamily.

It is found in the cell inner membrane. The catalysed reaction is di-trans,octa-cis-undecaprenyl diphospho-N-acetyl-alpha-D-muramoyl-L-alanyl-D-glutamyl-meso-2,6-diaminopimeloyl-D-alanyl-D-alanine + UDP-N-acetyl-alpha-D-glucosamine = di-trans,octa-cis-undecaprenyl diphospho-[N-acetyl-alpha-D-glucosaminyl-(1-&gt;4)]-N-acetyl-alpha-D-muramoyl-L-alanyl-D-glutamyl-meso-2,6-diaminopimeloyl-D-alanyl-D-alanine + UDP + H(+). It participates in cell wall biogenesis; peptidoglycan biosynthesis. Cell wall formation. Catalyzes the transfer of a GlcNAc subunit on undecaprenyl-pyrophosphoryl-MurNAc-pentapeptide (lipid intermediate I) to form undecaprenyl-pyrophosphoryl-MurNAc-(pentapeptide)GlcNAc (lipid intermediate II). This is UDP-N-acetylglucosamine--N-acetylmuramyl-(pentapeptide) pyrophosphoryl-undecaprenol N-acetylglucosamine transferase from Rhodopseudomonas palustris (strain BisB18).